Here is a 308-residue protein sequence, read N- to C-terminus: Zinc transporter ZIP9 (308 aa).

Residues 4 to 24 (FLSISLLSVAMLVGCYVAGII) traverse the membrane as a helical segment. N-linked (GlcNAc...) asparagine glycosylation occurs at N29. 5 helical membrane passes run 35–55 (LKLV…AVIV), 107–127 (AYIG…DQIG), 147–167 (ITTT…LGAA), 177–197 (LIVF…LVSF), and 211–231 (HLLV…LGLS). The N-linked (GlcNAc...) asparagine glycan is linked to N242. 2 consecutive transmembrane segments (helical) span residues 245–265 (GVAM…HVLP) and 287–307 (LEVA…IGHQ).

Belongs to the ZIP transporter (TC 2.A.5) family.

It is found in the golgi apparatus. Its subcellular location is the trans-Golgi network membrane. It localises to the cell membrane. The protein localises to the cytoplasm. The protein resides in the perinuclear region. It is found in the mitochondrion. Its subcellular location is the nucleus. The catalysed reaction is Zn(2+)(in) = Zn(2+)(out). Its function is as follows. Transports zinc ions across cell and organelle membranes into the cytoplasm and regulates intracellular zinc homeostasis. Participates in the zinc ions efflux out of the secretory compartments. Regulates intracellular zinc level, resulting in the enhancement of AKT1 and MAPK3/MAPK1 (Erk1/2) phosphorylation in response to the BCR activation. Also functions as a membrane androgen receptor that mediates, through a G protein, the non-classical androgen signaling pathway, characterized by the activation of MAPK3/MAPK1 (Erk1/2) and transcription factors CREB1 or ATF1. This pathway contributes to CLDN1 and CLDN5 expression and tight junction formation between adjacent Sertoli cells. Mediates androgen-induced vascular endothelial cell proliferation through activation of an inhibitory G protein leading to the AKT1 and MAPK3/MAPK1 (Erk1/2) activation which in turn modulate inhibition (phosphorylation) of GSK3B and CCND1 transcription. Moreover, has dual functions as a membrane-bound androgen receptor and as an androgen-dependent zinc transporter both of which are mediated through an inhibitory G protein (Gi) that mediates both MAP kinase and zinc signaling leading to the androgen-dependent apoptotic process. This is Zinc transporter ZIP9 from Mus musculus (Mouse).